Consider the following 189-residue polypeptide: Elongation factor P (189 aa).

An N6-(3,6-diaminohexanoyl)-5-hydroxylysine modification is found at Lys-34.

It belongs to the elongation factor P family. In terms of processing, may be beta-lysylated on the epsilon-amino group of Lys-34 by the combined action of EpmA and EpmB, and then hydroxylated on the C5 position of the same residue by EpmC (if this protein is present). Lysylation is critical for the stimulatory effect of EF-P on peptide-bond formation. The lysylation moiety may extend toward the peptidyltransferase center and stabilize the terminal 3-CCA end of the tRNA. Hydroxylation of the C5 position on Lys-34 may allow additional potential stabilizing hydrogen-bond interactions with the P-tRNA.

The protein resides in the cytoplasm. It functions in the pathway protein biosynthesis; polypeptide chain elongation. Its function is as follows. Involved in peptide bond synthesis. Alleviates ribosome stalling that occurs when 3 or more consecutive Pro residues or the sequence PPG is present in a protein, possibly by augmenting the peptidyl transferase activity of the ribosome. Modification of Lys-34 is required for alleviation. In Buchnera aphidicola subsp. Baizongia pistaciae (strain Bp), this protein is Elongation factor P.